Consider the following 360-residue polypeptide: Uroporphyrinogen decarboxylase (360 aa).

Residues Arg-27 to Arg-31, Phe-46, Asp-77, Tyr-154, Thr-209, and His-327 each bind substrate.

The protein belongs to the uroporphyrinogen decarboxylase family. In terms of assembly, homodimer.

It localises to the cytoplasm. It catalyses the reaction uroporphyrinogen III + 4 H(+) = coproporphyrinogen III + 4 CO2. Its pathway is porphyrin-containing compound metabolism; protoporphyrin-IX biosynthesis; coproporphyrinogen-III from 5-aminolevulinate: step 4/4. Catalyzes the decarboxylation of four acetate groups of uroporphyrinogen-III to yield coproporphyrinogen-III. The protein is Uroporphyrinogen decarboxylase of Wigglesworthia glossinidia brevipalpis.